The primary structure comprises 611 residues: Aspartate--tRNA ligase, mitochondrial (611 aa).

The N-terminal 30 residues, 1–30 (MVLSRLPACLLPLVGTKVSIQGWLVATSRQ), are a transit peptide targeting the mitochondrion. Glu-192 is a binding site for L-aspartate. Residues 216–219 (QQYK) are aspartate. Arg-238 contacts L-aspartate. ATP-binding positions include 238 to 240 (RDE) and Glu-502. Arg-509 serves as a coordination point for L-aspartate. Residue 554-557 (GFDR) coordinates ATP.

This sequence belongs to the class-II aminoacyl-tRNA synthetase family. Type 1 subfamily.

The protein localises to the mitochondrion. The catalysed reaction is tRNA(Asp) + L-aspartate + ATP = L-aspartyl-tRNA(Asp) + AMP + diphosphate. The chain is Aspartate--tRNA ligase, mitochondrial (msd1) from Schizosaccharomyces pombe (strain 972 / ATCC 24843) (Fission yeast).